Here is a 411-residue protein sequence, read N- to C-terminus: 1-deoxy-D-xylulose 5-phosphate reductoisomerase (411 aa).

NADPH contacts are provided by Thr-11, Gly-12, Ser-13, Ile-14, and Asn-124. Lys-125 serves as a coordination point for 1-deoxy-D-xylulose 5-phosphate. Glu-126 contacts NADPH. Residue Asp-150 participates in Mn(2+) binding. Residues Ser-151, Glu-152, Ser-186, and His-209 each contribute to the 1-deoxy-D-xylulose 5-phosphate site. Glu-152 is a binding site for Mn(2+). Gly-215 is an NADPH binding site. Residues Ser-222, Asn-227, Lys-228, and Glu-231 each contribute to the 1-deoxy-D-xylulose 5-phosphate site. Glu-231 lines the Mn(2+) pocket.

It belongs to the DXR family. Mg(2+) serves as cofactor. Mn(2+) is required as a cofactor.

The enzyme catalyses 2-C-methyl-D-erythritol 4-phosphate + NADP(+) = 1-deoxy-D-xylulose 5-phosphate + NADPH + H(+). Its pathway is isoprenoid biosynthesis; isopentenyl diphosphate biosynthesis via DXP pathway; isopentenyl diphosphate from 1-deoxy-D-xylulose 5-phosphate: step 1/6. Its function is as follows. Catalyzes the NADPH-dependent rearrangement and reduction of 1-deoxy-D-xylulose-5-phosphate (DXP) to 2-C-methyl-D-erythritol 4-phosphate (MEP). The polypeptide is 1-deoxy-D-xylulose 5-phosphate reductoisomerase (Psychrobacter sp. (strain PRwf-1)).